Consider the following 718-residue polypeptide: Exostosin-2 (718 aa).

Residues 1 to 25 (MCASVKYNIRGPALIPRMKTKHRIY) are Cytoplasmic-facing. The chain crosses the membrane as a helical; Signal-anchor for type II membrane protein span at residues 26–46 (YITLFSIVLLGLIATGMFQFW). Over 47-718 (PHSIESSGDW…LKSFPNIGSL (672 aa)) the chain is Lumenal. 4 disulfides stabilise this stretch: cysteine 85-cysteine 90, cysteine 96-cysteine 151, cysteine 286-cysteine 300, and cysteine 318-cysteine 339. Asparagine 288 carries an N-linked (GlcNAc...) asparagine glycan. UDP contacts are provided by leucine 461, arginine 465, asparagine 490, and asparagine 517. The UDP-N-acetyl-alpha-D-glucosamine site is built by arginine 465, asparagine 490, asparagine 517, arginine 522, aspartate 538, aspartate 539, and aspartate 540. UDP is bound by residues aspartate 538 and aspartate 539. Aspartate 540 contacts Mn(2+). Residues tyrosine 582 and serine 584 each coordinate a protein. The cysteines at positions 626 and 676 are disulfide-linked. Residues glutamate 627 and aspartate 628 each contribute to the UDP-N-acetyl-alpha-D-glucosamine site. N-linked (GlcNAc...) asparagine glycosylation occurs at asparagine 637. The a protein site is built by lysine 651 and lysine 653. Residue arginine 673 participates in UDP-N-acetyl-alpha-D-glucosamine binding.

The protein belongs to the glycosyltransferase 47 family. Part of the heparan sulfate polymerase, a dimeric complex composed of EXT1 and EXT2. Could also form homooligomeric complexes. Interacts with NDST1. Interacts with GALNT5. It depends on Mn(2+) as a cofactor. Post-translationally, a soluble form is generated by proteolytic processing. N-glycosylated at Asn-637.

The protein resides in the golgi apparatus membrane. It is found in the golgi apparatus. Its subcellular location is the cis-Golgi network membrane. It localises to the endoplasmic reticulum membrane. The protein localises to the secreted. The catalysed reaction is 3-O-{[(1-&gt;4)-beta-D-GlcA-(1-&gt;4)-alpha-D-GlcNAc](n)-(1-&gt;4)-beta-D-GlcA-(1-&gt;3)-beta-D-Gal-(1-&gt;3)-beta-D-Gal-(1-&gt;4)-beta-D-Xyl}-L-seryl-[protein] + UDP-N-acetyl-alpha-D-glucosamine = 3-O-{alpha-D-GlcNAc-[(1-&gt;4)-beta-D-GlcA-(1-&gt;4)-alpha-D-GlcNAc](n)-(1-&gt;4)-beta-D-GlcA-(1-&gt;3)-beta-D-Gal-(1-&gt;3)-beta-D-Gal-(1-&gt;4)-beta-D-Xyl}-L-seryl-[protein] + UDP + H(+). Its pathway is protein modification; protein glycosylation. Its function is as follows. Glycosyltransferase forming with EXT1 the heterodimeric heparan sulfate polymerase which catalyzes the elongation of the heparan sulfate glycan backbone. Glycan backbone extension consists in the alternating transfer of (1-&gt;4)-beta-D-GlcA and (1-&gt;4)-alpha-D-GlcNAc residues from their respective UDP-sugar donors. Both EXT1 and EXT2 are required for the full activity of the polymerase since EXT1 bears the N-acetylglucosaminyl-proteoglycan 4-beta-glucuronosyltransferase activity within the complex while EXT2 carries the glucuronosyl-N-acetylglucosaminyl-proteoglycan 4-alpha-N-acetylglucosaminyltransferase activity. Heparan sulfate proteoglycans are ubiquitous components of the extracellular matrix and play an important role in tissue homeostasis and signaling. The polypeptide is Exostosin-2 (Bos taurus (Bovine)).